Here is a 608-residue protein sequence, read N- to C-terminus: Albumin (608 aa).

The signal sequence occupies residues 1 to 18 (MKWVTFLLLLFVSDSAFS). The propeptide occupies 19-24 (RGLFRR). 3 Albumin domains span residues 19–211 (RGLF…ALKE), 212–403 (KALA…EFQP), and 404–601 (LVEE…KLVA). Histidine 27 lines the Cu cation pocket. Serine 29 carries the phosphoserine modification. Residues glutamate 30 and aspartate 37 each coordinate Ca(2+). A disulfide bridge links cysteine 77 with cysteine 86. Phosphoserine occurs at positions 82 and 89. Histidine 91 serves as a coordination point for Zn(2+). 6 disulfide bridges follow: cysteine 99/cysteine 115, cysteine 114/cysteine 125, cysteine 148/cysteine 193, cysteine 192/cysteine 201, cysteine 224/cysteine 270, and cysteine 269/cysteine 277. Glutamate 268 serves as a coordination point for Ca(2+). Residues histidine 271 and aspartate 273 each contribute to the Zn(2+) site. Positions 273, 276, and 279 each coordinate Ca(2+). Cystine bridges form between cysteine 289/cysteine 303, cysteine 302/cysteine 313, cysteine 340/cysteine 385, cysteine 384/cysteine 393, cysteine 416/cysteine 462, cysteine 461/cysteine 472, cysteine 485/cysteine 501, and cysteine 500/cysteine 511. A Phosphoserine modification is found at serine 297. Residue serine 443 is modified to Phosphoserine. Phosphothreonine is present on residues threonine 444 and threonine 446. Lysine 460 is subject to N6-succinyllysine. Serine 513 is modified (phosphoserine). 2 disulfide bridges follow: cysteine 538–cysteine 583 and cysteine 582–cysteine 591. Lysine 543 carries the post-translational modification N6-succinyllysine. Lysine 558 carries the N6-methyllysine modification. Threonine 570 carries the phosphothreonine modification. Lysine 588 carries the N6-succinyllysine modification.

Belongs to the ALB/AFP/VDB family. Interacts with FCGRT; this interaction regulates ALB homeostasis. Interacts with TASOR. In plasma, occurs in a covalently-linked complex with chromophore-bound alpha-1-microglobulin; this interaction does not prevent fatty acid binding to ALB. Plasma.

It localises to the secreted. Its function is as follows. Binds water, Ca(2+), Na(+), K(+), fatty acids, hormones, bilirubin and drugs. Its main function is the regulation of the colloidal osmotic pressure of blood. Major zinc transporter in plasma, typically binds about 80% of all plasma zinc. Major calcium and magnesium transporter in plasma, binds approximately 45% of circulating calcium and magnesium in plasma. Potentially has more than two calcium-binding sites and might additionally bind calcium in a non-specific manner. The shared binding site between zinc and calcium at residue Asp-273 suggests a crosstalk between zinc and calcium transport in the blood. The rank order of affinity is zinc &gt; calcium &gt; magnesium. Binds to the bacterial siderophore enterobactin and inhibits enterobactin-mediated iron uptake of E.coli from ferric transferrin, and may thereby limit the utilization of iron and growth of enteric bacteria such as E.coli. Does not prevent iron uptake by the bacterial siderophore aerobactin. The protein is Albumin of Mesocricetus auratus (Golden hamster).